Here is a 55-residue protein sequence, read N- to C-terminus: Large ribosomal subunit protein bL33 (55 aa).

It belongs to the bacterial ribosomal protein bL33 family.

In Yersinia enterocolitica serotype O:8 / biotype 1B (strain NCTC 13174 / 8081), this protein is Large ribosomal subunit protein bL33.